Here is a 397-residue protein sequence, read N- to C-terminus: Oxygen-dependent coproporphyrinogen-III oxidase, chloroplastic (397 aa).

The segment at 76–95 (ESDMGSNVTSNSSSVRGRFE) is disordered. Polar residues predominate over residues 79–90 (MGSNVTSNSSSV). Positions 135 to 144 (VLQDGAVFEK) are important for dimerization. Ser185 serves as a coordination point for substrate. Residue His199 is the Proton donor of the active site. Substrate-binding positions include 201 to 203 (NYR) and 355 to 360 (GGRIES). The important for dimerization stretch occupies residues 337-372 (YVEFNLVYDRGTTFGLKTGGRIESILVSLPLTARWE).

It belongs to the aerobic coproporphyrinogen-III oxidase family. Homodimer.

It localises to the plastid. The protein resides in the chloroplast. It carries out the reaction coproporphyrinogen III + O2 + 2 H(+) = protoporphyrinogen IX + 2 CO2 + 2 H2O. Its pathway is porphyrin-containing compound metabolism; protoporphyrin-IX biosynthesis; protoporphyrinogen-IX from coproporphyrinogen-III (O2 route): step 1/1. In terms of biological role, involved in the heme and chlorophyll biosynthesis. Catalyzes the aerobic oxidative decarboxylation of propionate groups of rings A and B of coproporphyrinogen-III to yield the vinyl groups in protoporphyrinogen-IX. This Nicotiana tabacum (Common tobacco) protein is Oxygen-dependent coproporphyrinogen-III oxidase, chloroplastic (CPX).